The chain runs to 97 residues: YcgL domain-containing protein CKO_01183 (97 aa).

The region spanning Met-1–Leu-85 is the YcgL domain. Residues Pro-74–Ser-97 are disordered.

This is YcgL domain-containing protein CKO_01183 from Citrobacter koseri (strain ATCC BAA-895 / CDC 4225-83 / SGSC4696).